Here is a 96-residue protein sequence, read N- to C-terminus: Large ribosomal subunit protein eL14 (96 aa).

Belongs to the eukaryotic ribosomal protein eL14 family.

In Metallosphaera sedula (strain ATCC 51363 / DSM 5348 / JCM 9185 / NBRC 15509 / TH2), this protein is Large ribosomal subunit protein eL14.